Reading from the N-terminus, the 1113-residue chain is Myosin-binding protein 1 (1113 aa).

The chain crosses the membrane as a helical span at residues 12–34; the sequence is LAFNEWLLMFMLFVNSIFSYVIA. A disordered region spans residues 209 to 229; that stretch reads ESEAVFSDTEPKQESSLNHLP. The region spanning 888-986 is the GTD-binding domain; the sequence is SEGDRLKRQV…DLEAEIEYFR (99 aa).

In terms of assembly, interacts with myosin XI-K, XI-I and XI-1. Expressed in leaf epidermal cells, roots and root hairs.

It is found in the endomembrane system. Functionally, membrane-anchored myosin receptors that define a distinct, plant-specific transport vesicle compartment. This is Myosin-binding protein 1 from Arabidopsis thaliana (Mouse-ear cress).